The sequence spans 867 residues: Heat shock 70 kDa protein 17 (867 aa).

The N-terminal stretch at Met1–Ser24 is a signal peptide. 2 stretches are compositionally biased toward polar residues: residues Thr560–Glu575 and Asp587–Ala598. Disordered stretches follow at residues Thr560–Gly607 and Pro829–Leu867. Over residues Pro833–Leu867 the composition is skewed to basic and acidic residues. The Prevents secretion from ER signature appears at Asp865–Leu867.

It belongs to the heat shock protein 70 (TC 1.A.33) family. HSP110/SSE subfamily.

It is found in the endoplasmic reticulum lumen. This is Heat shock 70 kDa protein 17 (HSP70-17) from Arabidopsis thaliana (Mouse-ear cress).